Reading from the N-terminus, the 505-residue chain is Deoxyguanosinetriphosphate triphosphohydrolase (505 aa).

Residues 66 to 273 form the HD domain; that stretch reads RLTHSMEVQQ…MEAADDISYC (208 aa).

The protein belongs to the dGTPase family. Type 1 subfamily. Homotetramer. Mg(2+) serves as cofactor.

The catalysed reaction is dGTP + H2O = 2'-deoxyguanosine + triphosphate + H(+). Its function is as follows. dGTPase preferentially hydrolyzes dGTP over the other canonical NTPs. This chain is Deoxyguanosinetriphosphate triphosphohydrolase, found in Serratia proteamaculans (strain 568).